Reading from the N-terminus, the 339-residue chain is Anthranilate phosphoribosyltransferase (339 aa).

5-phospho-alpha-D-ribose 1-diphosphate-binding positions include Gly-79, Gly-82–Asp-83, Ser-87, Asn-89–Thr-92, Lys-107–Ser-115, and Ser-119. Gly-79 provides a ligand contact to anthranilate. Mg(2+) is bound at residue Ser-91. Asn-110 contributes to the anthranilate binding site. Arg-165 is an anthranilate binding site. Residues Asp-224 and Glu-225 each coordinate Mg(2+).

Belongs to the anthranilate phosphoribosyltransferase family. Homodimer. The cofactor is Mg(2+).

The catalysed reaction is N-(5-phospho-beta-D-ribosyl)anthranilate + diphosphate = 5-phospho-alpha-D-ribose 1-diphosphate + anthranilate. It participates in amino-acid biosynthesis; L-tryptophan biosynthesis; L-tryptophan from chorismate: step 2/5. Its function is as follows. Catalyzes the transfer of the phosphoribosyl group of 5-phosphorylribose-1-pyrophosphate (PRPP) to anthranilate to yield N-(5'-phosphoribosyl)-anthranilate (PRA). The polypeptide is Anthranilate phosphoribosyltransferase (Listeria monocytogenes serovar 1/2a (strain ATCC BAA-679 / EGD-e)).